Reading from the N-terminus, the 419-residue chain is Gamma-glutamyl phosphate reductase (419 aa).

Belongs to the gamma-glutamyl phosphate reductase family.

It is found in the cytoplasm. It carries out the reaction L-glutamate 5-semialdehyde + phosphate + NADP(+) = L-glutamyl 5-phosphate + NADPH + H(+). It participates in amino-acid biosynthesis; L-proline biosynthesis; L-glutamate 5-semialdehyde from L-glutamate: step 2/2. In terms of biological role, catalyzes the NADPH-dependent reduction of L-glutamate 5-phosphate into L-glutamate 5-semialdehyde and phosphate. The product spontaneously undergoes cyclization to form 1-pyrroline-5-carboxylate. This is Gamma-glutamyl phosphate reductase from Oleidesulfovibrio alaskensis (strain ATCC BAA-1058 / DSM 17464 / G20) (Desulfovibrio alaskensis).